The sequence spans 465 residues: MGNLLGGVSFREPTTVEDCDSTWQTDSEPEPEQPGPAGGGEGQEQDEREQPEQPPERAGGRPRASPVPEDHAEAAGAEQGGDSTEGNAKPKRSFYAARDLYKYRHQYPNFKDIRYQNDLSNLRFYKNKIPFKPDGVYIEEVLNKWKGDYEKLEHNHTYIQWLFPLREQGLNFYAKELTTYEIEEFKKTKEAIRRFLLAYKMMLEFFGIKLIDKTGNVARAVNWQERFQHLNESQHNYLRITRILKSLGELGYESFKSPLVKFILHEALVENTIPNIKQSALEYFVYTIRDRRERRKLLRFAQKHYTPSENFIWGPPKKEQPERSKAQKTPTLPALGSNGQTSTHKKSKDSKNSSAASHLNNKTVEEKKVASREPGEETDKPSPEASSEDTKPRNSEDDNAADQSESPPKKTVNDSAGKGECPTTSSEKDGEGENQSKDSENPENTSCHAEVVSQQNVTNPQTSSG.

Disordered regions lie at residues 1–89 (MGNL…GNAK) and 309–465 (ENFI…TSSG). 4 stretches are compositionally biased toward basic and acidic residues: residues 48-59 (REQPEQPPERAG), 316-325 (PKKEQPERSK), 363-396 (TVEEKKVASREPGEETDKPSPEASSEDTKPRNSE), and 426-440 (SEKDGEGENQSKDSE). Polar residues predominate over residues 442–465 (PENTSCHAEVVSQQNVTNPQTSSG).

This sequence belongs to the opioid growth factor receptor family.

This Rattus norvegicus (Rat) protein is Opioid growth factor receptor-like protein 1 (Ogfrl1).